Here is a 285-residue protein sequence, read N- to C-terminus: Aquaporin-6 (285 aa).

3 helical membrane passes run 36–56, 76–96, and 105–125; these read IFWKSIRAELIGSLVLMVFSC, YCFKSISAHFNPVITIAALLL, and ISLVLAQTLGTLSGASVCYYG. The NPA 1 signature appears at 86–88; sequence NPV. Residue N128 is glycosylated (N-linked (GlcNAc...) asparagine). 2 helical membrane-spanning segments follow: residues 143-163 and 177-197; these read VSPAKGFGYEFFGTFVIILTM and GDSNLLPLIFGLSVGLSSGMA. The NPA 2 motif lies at 206 to 208; that stretch reads NPM. A helical membrane pass occupies residues 225–245; that stretch reads YIYWIGPIFGCLLAVFTFDYT.

Belongs to the MIP/aquaporin (TC 1.A.8) family.

It localises to the cell membrane. Probable water-specific aquaporin that may modulate the water content and osmolytes during anhydrobiosis. This chain is Aquaporin-6, found in Milnesium tardigradum (Water bear).